The chain runs to 747 residues: Pseudouridine-metabolizing bifunctional protein C1861.05 (747 aa).

Positions 1-379 are pseudouridine-5'-phosphate glycosidase; sequence MLIVMNRGCR…KVSDKGVSSS (379 aa). The Proton donor; for PsiMP glycosidase activity role is filled by Glu61. The substrate site is built by Lys123 and Val143. Asp175 contributes to the Mn(2+) binding site. Substrate is bound at residue 177–179; the sequence is SAD. Catalysis depends on Lys196, which acts as the Nucleophile; for PsiMP glycosidase activity. Residues 380–747 are pseudouridine kinase; it reads KKKITETTSK…VNPEIKTLLK (368 aa).

In the N-terminal section; belongs to the pseudouridine-5'-phosphate glycosidase family. It in the C-terminal section; belongs to the carbohydrate kinase PfkB family. Requires Mn(2+) as cofactor.

The protein resides in the cytoplasm. It catalyses the reaction D-ribose 5-phosphate + uracil = psi-UMP + H2O. It carries out the reaction pseudouridine + ATP = psi-UMP + ADP + H(+). Bifunctional enzyme that catalyzes the phosphorylation of pseudouridine to pseudouridine 5'-phosphate (PsiMP), and the reversible cleavage of pseudouridine 5'-phosphate to ribose 5-phosphate and uracil. Is involved in a pseudouridine degradation pathway. This Schizosaccharomyces pombe (strain 972 / ATCC 24843) (Fission yeast) protein is Pseudouridine-metabolizing bifunctional protein C1861.05.